The chain runs to 348 residues: Heat-inducible transcription repressor HrcA (348 aa).

It belongs to the HrcA family.

Its function is as follows. Negative regulator of class I heat shock genes (grpE-dnaK-dnaJ and groELS operons). Prevents heat-shock induction of these operons. The chain is Heat-inducible transcription repressor HrcA from Ruminiclostridium cellulolyticum (strain ATCC 35319 / DSM 5812 / JCM 6584 / H10) (Clostridium cellulolyticum).